Consider the following 119-residue polypeptide: Large ribosomal subunit protein uL18 (119 aa).

This sequence belongs to the universal ribosomal protein uL18 family. In terms of assembly, part of the 50S ribosomal subunit; part of the 5S rRNA/L5/L18/L25 subcomplex. Contacts the 5S and 23S rRNAs.

Functionally, this is one of the proteins that bind and probably mediate the attachment of the 5S RNA into the large ribosomal subunit, where it forms part of the central protuberance. In Borreliella afzelii (strain PKo) (Borrelia afzelii), this protein is Large ribosomal subunit protein uL18.